The primary structure comprises 323 residues: MKPENKIPVLTRLSDKMKAVVNFQQPGLPPWPADGDIETQRQYYLLERRFWNADAPSMTTRTCAVPTPYGDVTTRLYSPQPTSQATLYYLHGGGFILGNLDTHDRIMRLLARYTGCTVIGIDYSLSPQARYPQAIEETVAVCSYFSQHADEYSLNVEKIGFAGDSAGAMLALASALWLRDKHIRCGNVIAILLWYGLYGLQDSVSRRLFGGAWDGLTREDLDMYEKAYLRNDEDRESPWYCLFNNDLTRDVPPCFIASAEFDPLIDDSRLLHQTLQAHQQPCEYKMYPGTLHAFLHYSRMMTIADDALQDGARFFMARMKTPR.

Positions 91 to 93 (HGG) match the Involved in the stabilization of the negatively charged intermediate by the formation of the oxyanion hole motif. Residues S165, D262, and H292 contribute to the active site.

The protein belongs to the 'GDXG' lipolytic enzyme family. Homodimer. Interacts with MalT and MelA.

It localises to the cytoplasm. Its function is as follows. Displays esterase activity towards short chain fatty esters (acyl chain length of up to 8 carbons). Able to hydrolyze triacetylglycerol (triacetin) and tributyrylglycerol (tributyrin), but not trioleylglycerol (triolein) or cholesterol oleate. Negatively regulates MalT activity by antagonizing maltotriose binding. Inhibits MelA galactosidase activity. This Salmonella paratyphi A (strain AKU_12601) protein is Acetyl esterase.